A 122-amino-acid polypeptide reads, in one-letter code: Large ribosomal subunit protein uL14 (122 aa).

The protein belongs to the universal ribosomal protein uL14 family. In terms of assembly, part of the 50S ribosomal subunit. Forms a cluster with proteins L3 and L19. In the 70S ribosome, L14 and L19 interact and together make contacts with the 16S rRNA in bridges B5 and B8.

Functionally, binds to 23S rRNA. Forms part of two intersubunit bridges in the 70S ribosome. The chain is Large ribosomal subunit protein uL14 from Caulobacter vibrioides (strain ATCC 19089 / CIP 103742 / CB 15) (Caulobacter crescentus).